The following is a 1859-amino-acid chain: U3 small nucleolar RNA-associated protein 10 (1859 aa).

A helical transmembrane segment spans residues 258–278 (LGAYSVLAVLSAVAPLSIELL). The stretch at 578–616 (VLPLLLIAFNDPSSHIRAAFAQLVQLVSEITKAIHENKK) is one HEAT 1 repeat. Residues 1392 to 1412 (IVIASISAIVSIVNVLGIKTL) traverse the membrane as a helical segment. The stretch at 1819–1857 (LVPHIAELLEDDDEAVEIEVREGLVRVIEKVLGEPLDRY) is one HEAT 2 repeat.

Belongs to the HEATR1/UTP10 family. As to quaternary structure, component of the ribosomal small subunit (SSU) processome.

It is found in the nucleus. Its subcellular location is the nucleolus. It localises to the membrane. In terms of biological role, involved in nucleolar processing of pre-18S ribosomal RNA. Involved in ribosome biosynthesis. The polypeptide is U3 small nucleolar RNA-associated protein 10 (Lodderomyces elongisporus (strain ATCC 11503 / CBS 2605 / JCM 1781 / NBRC 1676 / NRRL YB-4239) (Yeast)).